Here is a 128-residue protein sequence, read N- to C-terminus: Small ribosomal subunit protein uS12 (128 aa).

At aspartate 89 the chain carries 3-methylthioaspartic acid. The tract at residues serine 101–lysine 128 is disordered.

This sequence belongs to the universal ribosomal protein uS12 family. In terms of assembly, part of the 30S ribosomal subunit. Contacts proteins S8 and S17. May interact with IF1 in the 30S initiation complex.

Functionally, with S4 and S5 plays an important role in translational accuracy. Interacts with and stabilizes bases of the 16S rRNA that are involved in tRNA selection in the A site and with the mRNA backbone. Located at the interface of the 30S and 50S subunits, it traverses the body of the 30S subunit contacting proteins on the other side and probably holding the rRNA structure together. The combined cluster of proteins S8, S12 and S17 appears to hold together the shoulder and platform of the 30S subunit. This is Small ribosomal subunit protein uS12 from Chloroherpeton thalassium (strain ATCC 35110 / GB-78).